A 61-amino-acid chain; its full sequence is Large ribosomal subunit protein uL30 (61 aa).

This sequence belongs to the universal ribosomal protein uL30 family. Part of the 50S ribosomal subunit.

The protein is Large ribosomal subunit protein uL30 of Mycobacterium sp. (strain KMS).